The chain runs to 238 residues: Photosynthetic NDH subunit of lumenal location 1, chloroplastic (238 aa).

This sequence belongs to the PsbP family. Part of the chloroplast NDH complex, composed of a mixture of chloroplast and nucleus encoded subunits. Component of the NDH lumenal subcomplex, at least composed of PnsL1, PnsL2, PnsL3, PnsL4 and PnsL5.

It is found in the plastid. The protein resides in the chloroplast thylakoid membrane. In terms of biological role, NDH shuttles electrons from NAD(P)H:plastoquinone, via FMN and iron-sulfur (Fe-S) centers, to quinones in the photosynthetic chain and possibly in a chloroplast respiratory chain. The immediate electron acceptor for the enzyme in this species is believed to be plastoquinone. Couples the redox reaction to proton translocation, and thus conserves the redox energy in a proton gradient. Required for accumulation of the chloroplast NAD(P)H dehydrogenase (NDH) complex. The sequence is that of Photosynthetic NDH subunit of lumenal location 1, chloroplastic from Arabidopsis thaliana (Mouse-ear cress).